Consider the following 649-residue polypeptide: Acetyl-coenzyme A synthetase (649 aa).

CoA contacts are provided by residues 189–192, threonine 311, and asparagine 335; that span reads RGGK. Residues 387 to 389, 411 to 416, aspartate 500, and arginine 515 contribute to the ATP site; these read GEP and DTWWQT. Position 523 (serine 523) interacts with CoA. Arginine 526 lines the ATP pocket. Mg(2+)-binding residues include valine 537, histidine 539, and valine 542. Arginine 584 contributes to the CoA binding site. N6-acetyllysine is present on lysine 609.

It belongs to the ATP-dependent AMP-binding enzyme family. Mg(2+) serves as cofactor. Post-translationally, acetylated. Deacetylation by the SIR2-homolog deacetylase activates the enzyme.

It catalyses the reaction acetate + ATP + CoA = acetyl-CoA + AMP + diphosphate. Catalyzes the conversion of acetate into acetyl-CoA (AcCoA), an essential intermediate at the junction of anabolic and catabolic pathways. AcsA undergoes a two-step reaction. In the first half reaction, AcsA combines acetate with ATP to form acetyl-adenylate (AcAMP) intermediate. In the second half reaction, it can then transfer the acetyl group from AcAMP to the sulfhydryl group of CoA, forming the product AcCoA. The sequence is that of Acetyl-coenzyme A synthetase from Sinorhizobium medicae (strain WSM419) (Ensifer medicae).